The primary structure comprises 156 residues: ATP synthase subunit b (156 aa).

Residues 7-27 (IFFQMLVFFVLGWFTMKFVWP) form a helical membrane-spanning segment.

The protein belongs to the ATPase B chain family. In terms of assembly, F-type ATPases have 2 components, F(1) - the catalytic core - and F(0) - the membrane proton channel. F(1) has five subunits: alpha(3), beta(3), gamma(1), delta(1), epsilon(1). F(0) has three main subunits: a(1), b(2) and c(10-14). The alpha and beta chains form an alternating ring which encloses part of the gamma chain. F(1) is attached to F(0) by a central stalk formed by the gamma and epsilon chains, while a peripheral stalk is formed by the delta and b chains.

The protein localises to the cell inner membrane. In terms of biological role, f(1)F(0) ATP synthase produces ATP from ADP in the presence of a proton or sodium gradient. F-type ATPases consist of two structural domains, F(1) containing the extramembraneous catalytic core and F(0) containing the membrane proton channel, linked together by a central stalk and a peripheral stalk. During catalysis, ATP synthesis in the catalytic domain of F(1) is coupled via a rotary mechanism of the central stalk subunits to proton translocation. Functionally, component of the F(0) channel, it forms part of the peripheral stalk, linking F(1) to F(0). This chain is ATP synthase subunit b, found in Bordetella petrii (strain ATCC BAA-461 / DSM 12804 / CCUG 43448).